The primary structure comprises 483 residues: MORN repeat-containing protein 1 (483 aa).

S18 carries the phosphoserine modification. MORN repeat units lie at residues 39-61, 62-84, 86-108, 109-131, 132-154, 155-177, and 178-200; these read YEGE…DGSY, YEGE…WSGN, YSGQ…AGGH, YEGE…DGQV, YQGS…NGDK, YEGD…DGST, and YKGQ…SGVT. Residues 392 to 427 form a disordered region; the sequence is EKAGNRPKGDRSPPEVLSTAQEPLRGTNRSDGTTAE. Basic and acidic residues predominate over residues 394–404; the sequence is AGNRPKGDRSP. S403 carries the phosphoserine modification. A compositionally biased stretch (polar residues) spans 418-427; sequence TNRSDGTTAE.

The sequence is that of MORN repeat-containing protein 1 (Morn1) from Rattus norvegicus (Rat).